The following is a 173-amino-acid chain: Translation initiation factor IF-3 (173 aa).

The protein belongs to the IF-3 family. Monomer.

It localises to the cytoplasm. Functionally, IF-3 binds to the 30S ribosomal subunit and shifts the equilibrium between 70S ribosomes and their 50S and 30S subunits in favor of the free subunits, thus enhancing the availability of 30S subunits on which protein synthesis initiation begins. This chain is Translation initiation factor IF-3, found in Methylorubrum populi (strain ATCC BAA-705 / NCIMB 13946 / BJ001) (Methylobacterium populi).